The primary structure comprises 876 residues: Alanine--tRNA ligase (876 aa).

Positions 566, 570, 667, and 671 each coordinate Zn(2+).

Belongs to the class-II aminoacyl-tRNA synthetase family. Requires Zn(2+) as cofactor.

The protein localises to the cytoplasm. It catalyses the reaction tRNA(Ala) + L-alanine + ATP = L-alanyl-tRNA(Ala) + AMP + diphosphate. Catalyzes the attachment of alanine to tRNA(Ala) in a two-step reaction: alanine is first activated by ATP to form Ala-AMP and then transferred to the acceptor end of tRNA(Ala). Also edits incorrectly charged Ser-tRNA(Ala) and Gly-tRNA(Ala) via its editing domain. The polypeptide is Alanine--tRNA ligase (Albidiferax ferrireducens (strain ATCC BAA-621 / DSM 15236 / T118) (Rhodoferax ferrireducens)).